The primary structure comprises 121 residues: UPF0091 protein PH1428 (121 aa).

Belongs to the UPF0091 family.

The chain is UPF0091 protein PH1428 from Pyrococcus horikoshii (strain ATCC 700860 / DSM 12428 / JCM 9974 / NBRC 100139 / OT-3).